We begin with the raw amino-acid sequence, 246 residues long: uncharacterized protein (246 aa).

This is an uncharacterized protein from Acidianus sp. F28 (AFV-2).